The primary structure comprises 328 residues: Glucokinase (328 aa).

16–21 is a binding site for ATP; that stretch reads ADIGGT.

Belongs to the bacterial glucokinase family.

The protein resides in the cytoplasm. It catalyses the reaction D-glucose + ATP = D-glucose 6-phosphate + ADP + H(+). The chain is Glucokinase from Neisseria gonorrhoeae (strain ATCC 700825 / FA 1090).